Reading from the N-terminus, the 246-residue chain is Uridylate kinase (246 aa).

Position 11-14 (11-14 (KISG)) interacts with ATP. Gly53 contacts UMP. ATP-binding residues include Gly54 and Arg58. Residues Asp74 and 135–142 (TGSPYLTT) each bind UMP. Residues Thr162, Tyr169, and Asp172 each coordinate ATP.

It belongs to the UMP kinase family. In terms of assembly, homohexamer.

The protein localises to the cytoplasm. It carries out the reaction UMP + ATP = UDP + ADP. The protein operates within pyrimidine metabolism; CTP biosynthesis via de novo pathway; UDP from UMP (UMPK route): step 1/1. Its activity is regulated as follows. Inhibited by UTP. Catalyzes the reversible phosphorylation of UMP to UDP. In Chlamydia abortus (strain DSM 27085 / S26/3) (Chlamydophila abortus), this protein is Uridylate kinase.